The primary structure comprises 427 residues: Enolase (427 aa).

Residue Q163 coordinates (2R)-2-phosphoglycerate. E205 functions as the Proton donor in the catalytic mechanism. Residues D242, E287, and D314 each coordinate Mg(2+). Residues K339, R368, S369, and K390 each coordinate (2R)-2-phosphoglycerate. The active-site Proton acceptor is the K339.

This sequence belongs to the enolase family. It depends on Mg(2+) as a cofactor.

The protein localises to the cytoplasm. It is found in the secreted. It localises to the cell surface. It catalyses the reaction (2R)-2-phosphoglycerate = phosphoenolpyruvate + H2O. Its pathway is carbohydrate degradation; glycolysis; pyruvate from D-glyceraldehyde 3-phosphate: step 4/5. Functionally, catalyzes the reversible conversion of 2-phosphoglycerate (2-PG) into phosphoenolpyruvate (PEP). It is essential for the degradation of carbohydrates via glycolysis. The polypeptide is Enolase (Solibacter usitatus (strain Ellin6076)).